We begin with the raw amino-acid sequence, 2159 residues long: Calpain-type cysteine protease DEK1 (2159 aa).

An N-terminal signal peptide occupies residues 1-33; sequence MEGEGHHGVVLACSICGFLFAVLSPFSFWVLWA. Residues 34 to 70 are Extracellular-facing; sequence VNWRPWRLYSWIYARKWPTYVQGPQLSTLCSLLTLCA. The helical transmembrane segment at 71 to 91 threads the bilayer; that stretch reads WLVVISPIAVLLVWGSVLIAL. Topologically, residues 92-95 are cytoplasmic; sequence MERN. The chain crosses the membrane as a helical span at residues 96–116; sequence IIGLAVIMAGVALLLSFYSIM. Residues 117–127 are Extracellular-facing; the sequence is LWWRTQWQSSE. The chain crosses the membrane as a helical span at residues 128 to 148; that stretch reads AVAYLLLLAVCLLCAYDFCAI. Topologically, residues 149–164 are cytoplasmic; sequence YVTAGASASELNSPSG. A helical membrane pass occupies residues 165-185; that stretch reads FFFGVSVISLAINMLFICKIL. Topologically, residues 186-236 are extracellular; it reads FNVSGFDVDEYVRRSYKFAYSDCVEVAPVSCSPEPPDPSELYMTKSSRVKH. The helical transmembrane segment at 237-257 threads the bilayer; the sequence is LGLLYISSLLVLVGYSILYGL. Residues 258-264 are Cytoplasmic-facing; sequence TSKEARW. A helical membrane pass occupies residues 265–285; that stretch reads LGALTSVAVVILDWNLGLCSF. Topologically, residues 286-294 are extracellular; the sequence is RFELLKSRM. Residues 295–315 form a helical membrane-spanning segment; sequence IVLFVAGTSRAFLVSFGVHYW. The Cytoplasmic portion of the chain corresponds to 316–320; sequence YLGHC. A helical transmembrane segment spans residues 321–341; that stretch reads ISYAFVASVLLSAAVSSWLSI. Topologically, residues 342–623 are extracellular; sequence SNPSVARIDA…LIFHHLAGSP (282 aa). A disordered region spans residues 365–409; sequence RKGQNSSSNSSEGCGSSVKRSSGSVEAGQNGNAMDSMYRSNSQSD. A compositionally biased stretch (low complexity) spans 369–381; the sequence is NSSSNSSEGCGSS. The segment covering 382–409 has biased composition (polar residues); that stretch reads VKRSSGSVEAGQNGNAMDSMYRSNSQSD. The helical transmembrane segment at 624-644 threads the bilayer; sequence IRAFIVFTVMFIIETATVAIY. Residues 645-660 lie on the Cytoplasmic side of the membrane; that stretch reads RPETIKVINATHEQFE. A helical transmembrane segment spans residues 661-681; the sequence is FGFSILLLSPVVCSIMAFIWS. Residues 682–694 are Extracellular-facing; sequence LRAEEMLMTSKPQ. The helical transmembrane segment at 695-715 threads the bilayer; sequence KYGFIAWLLSTCVGLFLSFLS. The Cytoplasmic portion of the chain corresponds to 716–719; it reads KSSV. The chain crosses the membrane as a helical span at residues 720–740; it reads ILGLSLTVPLMVACLSFAVPI. Topologically, residues 741-770 are extracellular; the sequence is WIRNGYSFWIPGREFANRENVSQAPGEKER. Residues 771-791 traverse the membrane as a helical segment; it reads ALFVITIAVFTASIIGLGAIV. Residues 792 to 822 lie on the Cytoplasmic side of the membrane; sequence SAKPLDALGYKGWDADKNSSYSPYATSMYLG. Residues 823-843 form a helical membrane-spanning segment; that stretch reads WALSSTIAVITTGLIPIVAWF. Topologically, residues 844–853 are extracellular; that stretch reads ATYRFSPSSA. Residues 854–874 traverse the membrane as a helical segment; sequence ICVGLFATVLVSFCGASYWGV. The Cytoplasmic segment spans residues 875–887; that stretch reads VNSREDGVPLKAD. Residues 888 to 908 form a helical membrane-spanning segment; sequence FLAALLPLLCIPAFFSLFTGL. Residues 909–921 are Extracellular-facing; the sequence is YKWKDDDWKISRG. The helical transmembrane segment at 922–942 threads the bilayer; sequence VYLFVGMGMLLLFGAVAAVIV. Topologically, residues 943-946 are cytoplasmic; it reads TIRP. Residues 947-967 form a helical membrane-spanning segment; sequence WTVGVACLVAILFLVFVIGVI. Residues 968–981 lie on the Extracellular side of the membrane; it reads HYWTSNNFYLTRTQ. Residues 982-1002 form a helical membrane-spanning segment; it reads MLLVCSIAFLLALAAFLMGLF. Residues 1003 to 1016 are Cytoplasmic-facing; it reads HGKPFVGASIGYFS. Residues 1017-1037 traverse the membrane as a helical segment; the sequence is FIFLLTGRALTVLLSPPIVVY. The Extracellular segment spans residues 1038-1060; that stretch reads SPRVLPVYVYDAHADSAKNVSYA. Residues 1061–1081 form a helical membrane-spanning segment; the sequence is FLILYGIALATEVWGVIASLI. The Cytoplasmic segment spans residues 1082–2159; sequence MNPPFVGAGV…SKASIRLEAV (1078 aa). A phosphoserine mark is found at S1371 and S1376. The Calpain catalytic 1 domain occupies 1417–1609; that stretch reads TGRHCGELDL…MSPAEYGFFD (193 aa). At S1665 the chain carries Phosphoserine. In terms of domain architecture, Calpain catalytic 2 spans 1703–2005; the sequence is NFTDQEFPPE…FRSIYVCRVY (303 aa). Residues C1769, H1927, and N1947 contribute to the active site.

This sequence belongs to the peptidase C2 family. Post-translationally, autocatalytic proteolytic cleavage leading to the production of mainly cytoplasmic localized subproducts of about 85 and 120 kDa. As to expression, expressed in most tissues at low levels ranging from 30 to 55 ppm. Present in all endosperm cells at transcript level, but confined to aleurones at protein level.

The protein localises to the endoplasmic reticulum membrane. It localises to the cytoplasm. The protein resides in the cell membrane. It is found in the endosome membrane. Functionally, essential protease involved in epiderm development. Required for aleurone cell development in the endosperm probably by maintaining and restricting the aleurone and embryonic epidermal L1 cell-layer fates as well as meristems organization. Involved in the maintenance of adaxial/abaxial axis information in developing leaves, probably by regulating cell proliferation and expansion. Does not need calcium ions to be active. In Zea mays (Maize), this protein is Calpain-type cysteine protease DEK1 (DEK1).